A 395-amino-acid chain; its full sequence is Polar tube protein 1 (395 aa).

Positions 1 to 22 (MKGISKILSASIALMKLENVYS) are cleaved as a signal peptide. Disordered regions lie at residues 59–95 (CASG…APAE) and 111–133 (PGTT…QQPL). Over residues 68 to 80 (SPSPAAPTSPVTP) the composition is skewed to low complexity. Residues 81-91 (GKTSENETSPS) are compositionally biased toward polar residues. Asn86 carries N-linked (GlcNAc...) asparagine glycosylation. The segment covering 111–128 (PGTTSGTTPGSGPCETPE) has biased composition (low complexity). A glycan (N-linked (GlcNAc...) asparagine) is linked at Asn173. Repeat copies occupy residues 179–204 (PGQQ…MPST), 205–230 (PGQQ…TPST), 231–256 (PGQQ…TPST), and 257–282 (PGQQ…MPGT). Residues 179-282 (PGQQQILSGT…LCQDQGMPGT (104 aa)) form a 4 X 26 AA approximate tandem repeats region. The disordered stretch occupies residues 277–300 (QGMPGTSGVPGQQGQSSGQCCAPQ). Residues 280 to 300 (PGTSGVPGQQGQSSGQCCAPQ) are compositionally biased toward low complexity. N-linked (GlcNAc...) asparagine glycosylation is present at Asn311.

Interacts with PTP2 and PTP3.

Its subcellular location is the spore polar tube. Its function is as follows. Involved with PTP2 and PTP3 in the formation of the polar tube through which the infectious agent is passed on to the host cell. Accounts for at least 70 percent of the mass of the polar tube. The protein is Polar tube protein 1 (PTP1) of Encephalitozoon cuniculi (strain GB-M1) (Microsporidian parasite).